Here is a 732-residue protein sequence, read N- to C-terminus: Photosystem I P700 chlorophyll a apoprotein A1 (732 aa).

Transmembrane regions (helical) follow at residues 61–84, 145–168, 185–209, 278–296, 317–340, 356–382, 414–436, and 510–528; these read VFSSGLAHFSIVFFWLGGMHFHGA, LKYAAAAALIGSIATLWAAYFHMH, NAGQLAILAGLGSISWAGHQIHIAL, IASHHFFVGITCIISGIIA, WHSRLSINLAIAGSLSITFAHHIY, LSLFVHHMWIGGFFIVGAGAHASIFMI, IIMGHLIYVTIALGMHAFGIYIH, and FMVHHIHAFTIHCTLLILM. The [4Fe-4S] cluster site is built by Cys-552 and Cys-561. The next 2 helical transmembrane spans lie at 568-589 and 644-666; these read HVFLGVFWMYNSLSIVIFHFFW and LSGYGLIFLGAHFTWAFSLMFLW. Position 655 (His-655) interacts with chlorophyll a'. Chlorophyll a-binding residues include Met-663 and Tyr-671. A phylloquinone-binding site is contributed by Trp-672. A helical transmembrane segment spans residues 704 to 724; sequence AVGLVHYMLGGIGTTWAFFLA.

The protein belongs to the PsaA/PsaB family. The PsaA/B heterodimer binds the P700 chlorophyll special pair and subsequent electron acceptors. PSI consists of a core antenna complex that captures photons, and an electron transfer chain that converts photonic excitation into a charge separation. The eukaryotic PSI reaction center is composed of at least 11 subunits. P700 is a chlorophyll a/chlorophyll a' dimer, A0 is one or more chlorophyll a, A1 is one or both phylloquinones and FX is a shared 4Fe-4S iron-sulfur center. is required as a cofactor.

It localises to the plastid. The protein localises to the chloroplast thylakoid membrane. The catalysed reaction is reduced [plastocyanin] + hnu + oxidized [2Fe-2S]-[ferredoxin] = oxidized [plastocyanin] + reduced [2Fe-2S]-[ferredoxin]. Its function is as follows. PsaA and PsaB bind P700, the primary electron donor of photosystem I (PSI), as well as the electron acceptors A0, A1 and FX. PSI is a plastocyanin/cytochrome c6-ferredoxin oxidoreductase, converting photonic excitation into a charge separation, which transfers an electron from the donor P700 chlorophyll pair to the spectroscopically characterized acceptors A0, A1, FX, FA and FB in turn. Oxidized P700 is reduced on the lumenal side of the thylakoid membrane by plastocyanin or cytochrome c6. The chain is Photosystem I P700 chlorophyll a apoprotein A1 from Heterocapsa triquetra (Dinoflagellate).